An 833-amino-acid chain; its full sequence is MITLLLYLCVICNAIVLIRADSIADPWPEARHLLNTIAKSRDPMKEAAMEPNADEFVGFYVPMDYSPRNEEKNYQSIWQNEITDSQRHIYELLVQSSEQFNNSEATYTLSQIHLWSQYNFPHNMTLAHKYLEKFNDLTHFTNHSAIFDLAVMYATGGCASGNDQTVIPQDSAKALLYYQRAAQLGNLKAKQVLAYKYYSGFNVPRNFHKSLVLYRDIAEQLRKSYSRDEWDIVFPYWESYNVRISDFESGLLGKGLNSVPSSTVRKRTTRPDIGSPFIAQVNGVQMTLQIEPMGRFAFNGNDGNINGDEDDEDASERRIIRIYYAALNDYKGTYSQSRNCERAKNLLELTYKEFQPHVDNLDPLQVFYYVRCLQLLGHMYFTGEGSSKPNIHMAEEILTTSLEISRRAQGPIGRACIDLGLINQYITNNISQAISYYMKAMKTQANNGIVEFQLSKLATSFPEEKIGDPFNLMETAYLNGFIPAIYEFAVMIESGMNSKSSVENTAYLFKTFVDKNEAIMAPKLRTAFAALINDRSEVALWAYSQLAEQGYETAQVSAAYLMYQLPYEFEDPPRTTDQRKTLAISYYTRAFKQGNIDAGVVAGDIYFQMQNYSKAMALYQGAALKYSIQAIWNLGYMHEHGLGVNRDFHLAKRYYDQVSEHDHRFYLASKLSVLKLHLKSWLTWITREKVNYWKPSSPLNPNEDTQHSKTSWYKQLTKILQRMRHKEDSDKAAEDSHKHRTVVQNGANHRGDDQEEASEILGFQMEDLVTMGCILGIFLLSILMSTLAARRGWNVRFNGAQLNANGNRQQEQQQQQQAQGPPGWDFNVQIFAI.

Residues 1-20 (MITLLLYLCVICNAIVLIRA) form the signal peptide. Residues N101, N123, and N142 are each glycosylated (N-linked (GlcNAc...) asparagine). The stretch at 103–139 (SEATYTLSQIHLWSQYNFPHNMTLAHKYLEKFNDLTH) is one Sel1-like 1 repeat. 6 Sel1-like repeats span residues 143–186 (HSAI…QLGN), 187–222 (LKAK…EQLR), 413–445 (GRAC…KTQA), 552–595 (ETAQ…KQGN), 596–627 (IDAG…LKYS), and 628–663 (IQAI…EHDH). N-linked (GlcNAc...) asparagine glycosylation occurs at N429. N-linked (GlcNAc...) asparagine glycosylation occurs at N611. The helical transmembrane segment at 768–788 (LVTMGCILGIFLLSILMSTLA) threads the bilayer. A disordered region spans residues 805–824 (NGNRQQEQQQQQQAQGPPGW). Positions 809–819 (QQEQQQQQQAQ) are enriched in low complexity.

The protein belongs to the sel-1 family. Component of the HRD1 ubiquitin ligase complex which contains the E3 ligase HRD1, its cofactors HRD3, USA1 and DER1, substrate recruiting factor YOS9 and CDC48-binding protein UBX2. Within the complex, interacts directly with HRD1 and YOS9 (via N-terminus). In ERAD-L, HRD3 and YOS9 jointly bind misfolded glycoproteins in the endoplasmic reticulum (ER) lumen. Movement of ERAD-L substrates through the ER membrane is facilitated by HRD1 and DER1 which have lateral gates facing each other and which distort the membrane region between the lateral gates, making it much thinner than a normal phospholipid bilayer. Substrates insert into the membrane as a hairpin loop with one strand interacting with DER1 and the other with HRD1. The HRD1 complex interacts with the heterotrimeric CDC48-NPL4-UFD1 ATPase complex which is recruited by UBX2 via its interaction with CDC48 and which moves ubiquitinated substrates to the cytosol for targeting to the proteasome. The HRD1 complex interacts with the ERAD substrates HMG1 and HMG2. Interacts with KAR2.

It is found in the endoplasmic reticulum membrane. In terms of biological role, component of the endoplasmic reticulum quality control (ERQC) system involved in ubiquitin-dependent degradation of misfolded endoplasmic reticulum proteins. Component of the HRD1 ubiquitin ligase complex, which is part of the ERAD-L and ERAD-M pathways responsible for the rapid degradation of soluble lumenal and membrane proteins with misfolded lumenal domains (ERAD-L), or ER-membrane proteins with misfolded transmembrane domains (ERAD-M). ERAD-L substrates are ubiquitinated through HRD1 in conjunction with the E2 ubiquitin-conjugating enzymes UBC1 and UBC7-CUE1. Ubiquitinated substrates are then removed to the cytosol via the action of the CDC48-NPL4-UFD1 ATPase complex and targeted to the proteasome. ERAD-M substrates are processed by the same HRD1-HRD3 core complex, but only a subset of the other components is required for ERAD-M. Stabilizes the HRD1 ubiquitin-protein ligase. Also functions in recruiting misfolded protein substrates in conjunction with YOS9. The sequence is that of ERAD-associated E3 ubiquitin-protein ligase component HRD3 (HRD3) from Saccharomyces cerevisiae (strain ATCC 204508 / S288c) (Baker's yeast).